The chain runs to 596 residues: Nuclear receptor subfamily 2 group C member 2 (596 aa).

Ser19 is modified (phosphoserine; by MAPK). Residue Ser46 is modified to Phosphoserine. A phosphoserine; by MAPK mark is found at Ser55 and Ser68. Ser98 is subject to Phosphoserine. Residues 114-189 (VEYCVVCGDK…MGMKMESVQS (76 aa)) constitute a DNA-binding region (nuclear receptor). 2 consecutive NR C4-type zinc fingers follow at residues 117–137 (CVVCGDKASGRHYGAVSCEGC) and 153–177 (CRSSQDCIINKHHRNRCQFCRLKKC). Residue Lys192 forms a Glycyl lysine isopeptide (Lys-Gly) (interchain with G-Cter in SUMO2) linkage. Ser219 is modified (phosphoserine). Lys231 is subject to N6-acetyllysine. Residues 341-583 (GSIHVISRDQ…SIIPYILKME (243 aa)) enclose the NR LBD domain.

The protein belongs to the nuclear hormone receptor family. NR2 subfamily. In terms of assembly, homodimer; can bind DNA as homodimer. Heterodimer; binds DNA as a heterodimer with NR2C1 required for chromatin remodeling and for binding to promoter regions such as globin DR1 repeats. Interacts with NR2C2AP; the interaction represses selective NR2C2-mediated transcriptional activity. Interacts with PCAF; the interaction preferentially occurs on the non-phosphorylated form and induces NR2C2-mediated transactivation activity and does not require the ligand-binding domain. Interacts (MAPK-mediated phosphorylated form) with NRIP1; the interaction promotes repression of NR2C2-mediated activity. Interacts with NLRP10. Interacts (via ligand-binding region) with transcriptional corepressor JAZF1; the interaction promotes NR2C2-mediated transcriptional repression. Post-translationally, phosphorylation on Ser-19 and Ser-68 is an important regulator of NR2C2-mediated transcriptional activity. Phosphorylation on these residues recruits the corepressor, NRIP1, leading to transcripional repression, whereas the non-phosphorylated form preferentially recruits the coactivator, PCAF. Expressed, during embryogenesis, in perichondrium, developing glomeruli structures and tubules of kidney, as well as in intestiinal villi. Also expressed in lung and hair follicles.

Its subcellular location is the nucleus. In terms of biological role, orphan nuclear receptor that can act as a repressor or activator of transcription. An important repressor of nuclear receptor signaling pathways such as retinoic acid receptor, retinoid X, vitamin D3 receptor, thyroid hormone receptor and estrogen receptor pathways. May regulate gene expression during the late phase of spermatogenesis. Activates transcriptional activity of LHCG and is antagonist of PPARA-mediated transactivation. Together with NR2C1, forms the core of the DRED (direct repeat erythroid-definitive) complex that represses embryonic and fetal globin transcription including that of GATA1. Binds to hormone response elements (HREs) consisting of two 5'-AGGTCA-3' half site direct repeat consensus sequences. Plays a fundamental role in early embryonic development and embryonic stem cells. Required for normal spermatogenesis and cerebellum development. Appears to be important for neurodevelopmentally regulated behavior. The protein is Nuclear receptor subfamily 2 group C member 2 (Nr2c2) of Mus musculus (Mouse).